The primary structure comprises 260 residues: uncharacterized protein (260 aa).

Positions 1-38 form a coiled coil; it reads MNWTREIEQYKQVVASYKLKMKRMEMKISDISEEKRQS.

This is an uncharacterized protein from Caenorhabditis elegans.